The following is a 215-amino-acid chain: AN1-type zinc finger protein C1271.05c (215 aa).

Positions 116–128 (IPSISKSNLTNPP) are enriched in polar residues. The segment at 116 to 138 (IPSISKSNLTNPPLESEKSSDKA) is disordered. The AN1-type zinc-finger motif lies at 144 to 193 (ATSRRRCCHPTCTRITLRLAGNCLHCNGRFCAAHRLMEDHDCVALFSLRK). Zn(2+)-binding residues include Cys150, Cys155, Cys166, Cys169, Cys174, His177, His183, and Cys185.

It localises to the cytoplasm. It is found in the nucleus. This chain is AN1-type zinc finger protein C1271.05c, found in Schizosaccharomyces pombe (strain 972 / ATCC 24843) (Fission yeast).